A 443-amino-acid polypeptide reads, in one-letter code: Lysine-specific demethylase 8 (443 aa).

A compositionally biased stretch (basic and acidic residues) spans 139 to 165; that stretch reads TKLEAERGVREPGLESSKLHSPGEHSN. The disordered stretch occupies residues 139 to 174; that stretch reads TKLEAERGVREPGLESSKLHSPGEHSNKKSFASVTG. Residues 298 to 443 enclose the JmjC domain; that stretch reads GYLAQHQLFE…LSFSVSFWWS (146 aa). Fe cation is bound by residues His-348, Asp-350, and His-427.

Requires Fe(2+) as cofactor.

The protein localises to the nucleus. The catalysed reaction is N(6),N(6)-dimethyl-L-lysyl(36)-[histone H3] + 2 2-oxoglutarate + 2 O2 = L-lysyl(36)-[histone H3] + 2 formaldehyde + 2 succinate + 2 CO2. Histone demethylase required for G2/M phase cell cycle progression. Specifically demethylates dimethylated 'Lys-36' (H3K36me2) of histone H3, an epigenetic repressive mark, thereby acting as a transcription activator. May play a role in the regulation of the circadian clock. The chain is Lysine-specific demethylase 8 (kdm8) from Xenopus tropicalis (Western clawed frog).